The following is a 2395-amino-acid chain: Helicase ssl-1 (2395 aa).

Low complexity predominate over residues Met-1–Arg-12. The interval Met-1–Asp-62 is disordered. The HSA domain maps to Leu-227–Gly-300. Polar residues predominate over residues Leu-354 to Ile-363. 2 disordered regions span residues Leu-354–Glu-404 and Glu-444–Leu-504. 3 stretches are compositionally biased toward basic and acidic residues: residues Ser-365–Lys-375, Lys-394–Glu-404, and Glu-444–Lys-462. Positions Thr-388 to Glu-464 form a coiled coil. Polar residues predominate over residues Ser-470–Asp-490. A Helicase ATP-binding domain is found at Val-570 to Thr-735. Asp-583–Thr-590 lines the ATP pocket. Positions Ala-963–Thr-982 are disordered. Residues Leu-1196 to Thr-1342 form the Helicase C-terminal domain. Positions Lys-1452–Asn-1476 form a coiled coil. Disordered regions lie at residues Glu-1615–Asp-1706, Ser-1977–Ala-2073, Gln-2092–Arg-2143, Gln-2276–Val-2306, and Met-2350–Asn-2395. Low complexity-rich tracts occupy residues Gln-1647–Gln-1669 and Leu-1981–Gln-1995. The segment covering Asn-1996–Asn-2019 has biased composition (polar residues). 2 stretches are compositionally biased toward low complexity: residues Leu-2051–Ala-2073 and Gln-2092–Asp-2114. Residues Gly-2115–Ser-2129 are compositionally biased toward gly residues. Residues Gln-2130 to Gln-2142 are compositionally biased toward low complexity. Residues Asn-2281–Gln-2299 are compositionally biased toward gly residues. Residues Gln-2361–Pro-2377 are compositionally biased toward low complexity.

This sequence belongs to the SNF2/RAD54 helicase family. SWR1 subfamily.

The protein resides in the nucleus. Functionally, probable catalytic component of a chromatin-remodeling complex which mediates the ATP-dependent exchange of histone H2A variant H2AV/htz-1 for H2A, leading to transcriptional regulation of selected genes by chromatin remodeling. Involved in foregut development, and may be involved in vulval development. This chain is Helicase ssl-1 (ssl-1), found in Caenorhabditis elegans.